Reading from the N-terminus, the 525-residue chain is GMP synthase [glutamine-hydrolyzing] (525 aa).

One can recognise a Glutamine amidotransferase type-1 domain in the interval 9-207; the sequence is RILILDFGSQ…VRDICQCEAL (199 aa). The Nucleophile role is filled by Cys-86. Residues His-181 and Glu-183 contribute to the active site. The GMPS ATP-PPase domain occupies 208–400; that stretch reads WTPAKIIDDA…LGLPYDMLYR (193 aa). 235–241 provides a ligand contact to ATP; the sequence is SGGVDSS.

Homodimer.

The enzyme catalyses XMP + L-glutamine + ATP + H2O = GMP + L-glutamate + AMP + diphosphate + 2 H(+). It functions in the pathway purine metabolism; GMP biosynthesis; GMP from XMP (L-Gln route): step 1/1. Functionally, catalyzes the synthesis of GMP from XMP. This Shigella flexneri protein is GMP synthase [glutamine-hydrolyzing].